Reading from the N-terminus, the 361-residue chain is Chorismate synthase (361 aa).

The NADP(+) site is built by Arg-48 and Arg-54. FMN-binding positions include 125 to 127 (RSS), 238 to 239 (NA), Gly-278, 293 to 297 (KPTSS), and Arg-319.

It belongs to the chorismate synthase family. In terms of assembly, homotetramer. The cofactor is FMNH2.

The enzyme catalyses 5-O-(1-carboxyvinyl)-3-phosphoshikimate = chorismate + phosphate. It functions in the pathway metabolic intermediate biosynthesis; chorismate biosynthesis; chorismate from D-erythrose 4-phosphate and phosphoenolpyruvate: step 7/7. Its function is as follows. Catalyzes the anti-1,4-elimination of the C-3 phosphate and the C-6 proR hydrogen from 5-enolpyruvylshikimate-3-phosphate (EPSP) to yield chorismate, which is the branch point compound that serves as the starting substrate for the three terminal pathways of aromatic amino acid biosynthesis. This reaction introduces a second double bond into the aromatic ring system. The polypeptide is Chorismate synthase (Escherichia coli O139:H28 (strain E24377A / ETEC)).